The sequence spans 337 residues: Anthranilate phosphoribosyltransferase (337 aa).

5-phospho-alpha-D-ribose 1-diphosphate contacts are provided by residues glycine 81, 84–85, serine 89, 91–94, 109–117, and alanine 121; these read GD, NVST, and KHGNRAMSS. Residue glycine 81 participates in anthranilate binding. Residue serine 93 participates in Mg(2+) binding. Anthranilate is bound at residue asparagine 112. Anthranilate is bound at residue arginine 167. Residues aspartate 226 and glutamate 227 each contribute to the Mg(2+) site.

The protein belongs to the anthranilate phosphoribosyltransferase family. As to quaternary structure, homodimer. The cofactor is Mg(2+).

It catalyses the reaction N-(5-phospho-beta-D-ribosyl)anthranilate + diphosphate = 5-phospho-alpha-D-ribose 1-diphosphate + anthranilate. It participates in amino-acid biosynthesis; L-tryptophan biosynthesis; L-tryptophan from chorismate: step 2/5. Catalyzes the transfer of the phosphoribosyl group of 5-phosphorylribose-1-pyrophosphate (PRPP) to anthranilate to yield N-(5'-phosphoribosyl)-anthranilate (PRA). In Afipia carboxidovorans (strain ATCC 49405 / DSM 1227 / KCTC 32145 / OM5) (Oligotropha carboxidovorans), this protein is Anthranilate phosphoribosyltransferase.